The primary structure comprises 391 residues: Ectodysplasin-A (391 aa).

Residues 1–21 (MGYPEVERREPLPAAAPRERG) show a composition bias toward basic and acidic residues. Positions 1–28 (MGYPEVERREPLPAAAPRERGSQGCGCR) are disordered. Topologically, residues 1–41 (MGYPEVERREPLPAAAPRERGSQGCGCRGAPARAGEGNSCR) are cytoplasmic. Residues 42-62 (LFLGFFGLSLALHLLTLCCYL) form a helical; Signal-anchor for type II membrane protein membrane-spanning segment. At 63–391 (ELRSELRRER…AIRLGEAPAS (329 aa)) the chain is on the extracellular side. Disordered regions lie at residues 73–130 (GAES…SQDG) and 145–245 (SYSE…GTRE). Low complexity predominate over residues 76–96 (SRFSGPGTPGTSGTLSSPGGL). Residues 180–229 (GPPGPNGPPGPPGPPGPQGPPGIPGIPGIPGTTVMGPPGPPGPPGPQGPP) form the Collagen-like domain. 2 stretches are compositionally biased toward pro residues: residues 181-203 (PPGP…PGIP) and 216-228 (PPGP…PQGP). In terms of domain architecture, THD spans 249 to 385 (AVVHLQGQGS…HTTFFGAIRL (137 aa)). N-linked (GlcNAc...) asparagine glycosylation is present at N313. Cysteines 332 and 346 form a disulfide. An N-linked (GlcNAc...) asparagine glycan is attached at N372.

The protein belongs to the tumor necrosis factor family. Homotrimer. The homotrimers may then dimerize and form higher-order oligomers. Post-translationally, N-glycosylated. Processing by furin produces a secreted form.

It localises to the cell membrane. The protein resides in the secreted. Functionally, cytokine which is involved in epithelial-mesenchymal signaling during morphogenesis of ectodermal organs. Functions as a ligand activating the DEATH-domain containing receptors EDAR and EDA2R. Isoform A1 binds only to the receptor EDAR, while isoform A2 binds exclusively to the receptor EDA2R. May also play a role in cell adhesion. In terms of biological role, isoform A1 binds only to the receptor EDAR, while isoform A2 binds exclusively to the receptor EDA2R. Isoform A2 binds exclusively to the receptor EDA2R. The protein is Ectodysplasin-A (EDA) of Bos taurus (Bovine).